Reading from the N-terminus, the 635-residue chain is Threonine--tRNA ligase (635 aa).

One can recognise a TGS domain in the interval 1-61 (MINISLSDGS…ENNCKLRILT (61 aa)). The tract at residues 242–533 (DHRKLGRELD…LIEEYAGCFP (292 aa)) is catalytic. Cys333, His384, and His510 together coordinate Zn(2+).

This sequence belongs to the class-II aminoacyl-tRNA synthetase family. In terms of assembly, homodimer. Zn(2+) is required as a cofactor.

It is found in the cytoplasm. It carries out the reaction tRNA(Thr) + L-threonine + ATP = L-threonyl-tRNA(Thr) + AMP + diphosphate + H(+). Catalyzes the attachment of threonine to tRNA(Thr) in a two-step reaction: L-threonine is first activated by ATP to form Thr-AMP and then transferred to the acceptor end of tRNA(Thr). Also edits incorrectly charged L-seryl-tRNA(Thr). This Rickettsia canadensis (strain McKiel) protein is Threonine--tRNA ligase.